Here is a 288-residue protein sequence, read N- to C-terminus: Small ribosomal subunit protein uS3 (288 aa).

The KH type-2 domain occupies 38 to 106 (IRRMMSKGLE…QVQLNIIEVK (69 aa)). Residues 209–288 (PGRETPAEAP…TQPAETQQEG (80 aa)) are disordered. Residues 219 to 232 (SRPRRERGDRSERP) are compositionally biased toward basic and acidic residues. The span at 249-264 (AGRAAATTIAQAAETP) shows a compositional bias: low complexity. A compositionally biased stretch (polar residues) spans 277–288 (AATQPAETQQEG).

Belongs to the universal ribosomal protein uS3 family. In terms of assembly, part of the 30S ribosomal subunit. Forms a tight complex with proteins S10 and S14.

Functionally, binds the lower part of the 30S subunit head. Binds mRNA in the 70S ribosome, positioning it for translation. The polypeptide is Small ribosomal subunit protein uS3 (Salinispora tropica (strain ATCC BAA-916 / DSM 44818 / JCM 13857 / NBRC 105044 / CNB-440)).